The sequence spans 130 residues: Small ribosomal subunit protein uS11 (130 aa).

The protein belongs to the universal ribosomal protein uS11 family. Part of the 30S ribosomal subunit. Interacts with proteins S7 and S18. Binds to IF-3.

In terms of biological role, located on the platform of the 30S subunit, it bridges several disparate RNA helices of the 16S rRNA. Forms part of the Shine-Dalgarno cleft in the 70S ribosome. In Thiobacillus denitrificans (strain ATCC 25259 / T1), this protein is Small ribosomal subunit protein uS11.